The sequence spans 81 residues: Serine/arginine-rich splicing factor 6 (81 aa).

Residues 1–48 (RSRSRSRRSSRSRSRSISKSRSRSRSRSKGRSRSRSKGRKSRSKSKSK) are compositionally biased toward basic residues. The tract at residues 1–81 (RSRSRSRRSS…SRSRSRSRSP (81 aa)) is disordered. Over residues 62–71 (RSKDEYEKSR) the composition is skewed to basic and acidic residues. A compositionally biased stretch (basic residues) spans 72 to 81 (SRSRSRSRSP).

Belongs to the splicing factor SR family. Binds SREK1/SFRS12. Interacts with DYRK1A. Post-translationally, extensively phosphorylated on serine residues in the RS domain. Phosphorylated by DYRK1A, probably in the RS domain. Phosphorylation by DYRK1A modulates alternative splice site selection and inhibits the expression of MAPT/Tau exon 10.

It localises to the nucleus. The protein resides in the nucleus speckle. Functionally, plays a role in constitutive splicing and modulates the selection of alternative splice sites. Plays a role in the alternative splicing of MAPT/Tau exon 10. Binds to alternative exons of TNC pre-mRNA and promotes the expression of alternatively spliced TNC. Plays a role in wound healing and in the regulation of keratinocyte differentiation and proliferation via its role in alternative splicing. This chain is Serine/arginine-rich splicing factor 6 (SRSF6), found in Oryctolagus cuniculus (Rabbit).